A 598-amino-acid polypeptide reads, in one-letter code: MNPTNYDPRIGQPAQSRPQVSLSMGRRIVQMPTGLPRSYQDESHNEPVGWDEPSGVGGSSGAGGQQSDKPTGLRHFSTKVCEKVKEKGLTNYNEVADELVADYFQNNLIKQIDVVKQEYDMKNIRRRVYDALNVLLAMNIITKSKKDIRWIGLPASASQEISRLEEEKSRREASISSKKQALEEMVLQIVSYKNLVERNRKNEHKNGRPENDTVLHLPFLIINTDKEANVECSVSSDKSEFLFSFDKKFEIHDDFEILKKLNLACSLETTNPTAEEVKTAKSFLPTLHQHYVDEIIANRKKVEAEKEEKRKQQQLIADQMSMNLSQAQYVEPTSSLAQMSYSSRFNRQLQEHLINDGSEDRSAAAGIMERDYDMDKNVNQGSASRGPMYNTYSPQKIRAQVNTPLQVPPVTKRYYVQKTQGPMKHDMTPVVRTVNRPYSTVPPDRRLSTGATSVNSGPVKYYVPQGHQPMHQPVGQRYRVRPQQPQMSHMGQPHQVQQRVVYPAGSISGHQLQPGQRIVTQRIVAPGGPHPPGTIVRKVIRKIVVNNPKQSPAQQVIQKKMMEQDMCTFERKTEQPMTSAQAAALIQHPQPEEYDYFQ.

Disordered stretches follow at residues 1 to 73 (MNPT…PTGL), 435 to 457 (NRPYSTVPPDRRLSTGATSVNSG), and 573 to 598 (TEQPMTSAQAAALIQHPQPEEYDYFQ). Residues 13–22 (PAQSRPQVSL) are compositionally biased toward polar residues. The segment covering 55 to 64 (GVGGSSGAGG) has biased composition (gly residues).

Belongs to the E2F/DP family. Component of the DRM complex, at least composed of lin-9, lin-35, lin-37, lin-52, lin-53, lin-54- dpl-1 and efl-1. Interacts (via N-terminus) with efl-1. Interacts (via C-terminus) with lin-35 (via C-terminus).

The protein resides in the nucleus. Synthetic multivulva class B (synMuvB) protein. SynMuvB proteins are required to repress the induction of vulval development by Ras signaling and probably act by forming the multiprotein DRM complex that represses transcription. May also negatively regulate vulval development in association with other SynMuv class B proteins such as lin-15A. Can stimulate E2F-dependent transcription. Plays a role in negatively regulating the progression through the G1 phase of the cell cycle during postembryonic development, most likely by acting as a transcriptional repressor in association with the cell cycle regulatory factor efl-1 and the transcriptional repressor lin-35, but may also act as a positive regulator of cell cycle entry. Involved in the regulation of intestinal cell division during postembryonic development, most likely in complex with efl-1 and lin-35. Promotes germ cell programmed cell death, probably together with efl-1, by positively regulating the expression of the apoptosis proteins ced-3 and ced-4. In particular, positively regulates the expression of ced-4 in response to starvation. Its role in programmed cell death may be in conjunction with cell cycle regulatory factor efl-1 and the synthetic multivulva class B proteins lin-35, lin-37 and lin-52, and is independent of the ced-1, ced-8 and ced-9 pathways. The protein is Transcription factor dpl-1 of Caenorhabditis elegans.